The sequence spans 305 residues: uncharacterized protein (305 aa).

The signal sequence occupies residues 1 to 29 (MSKAVSEILGYMYIFGIVMAVLAIVFVQV).

This is an uncharacterized protein from Archaeoglobus fulgidus (strain ATCC 49558 / DSM 4304 / JCM 9628 / NBRC 100126 / VC-16).